A 69-amino-acid polypeptide reads, in one-letter code: Cytochrome b-c1 complex subunit 6 (69 aa).

Cystine bridges form between cysteine 17–cysteine 59 and cysteine 31–cysteine 45.

The protein belongs to the UQCRH/QCR6 family. As to quaternary structure, component of the ubiquinol-cytochrome c oxidoreductase (cytochrome b-c1 complex, complex III, CIII), a multisubunit enzyme composed of 3 respiratory subunits cytochrome b, cytochrome c1 and Rieske protein, 2 core protein subunits, and additional low-molecular weight protein subunits. The complex exists as an obligatory dimer and forms supercomplexes (SCs) in the inner mitochondrial membrane with cytochrome c oxidase (complex IV, CIV).

Its subcellular location is the mitochondrion inner membrane. Component of the ubiquinol-cytochrome c oxidoreductase, a multisubunit transmembrane complex that is part of the mitochondrial electron transport chain which drives oxidative phosphorylation. The respiratory chain contains 3 multisubunit complexes succinate dehydrogenase (complex II, CII), ubiquinol-cytochrome c oxidoreductase (cytochrome b-c1 complex, complex III, CIII) and cytochrome c oxidase (complex IV, CIV), that cooperate to transfer electrons derived from NADH and succinate to molecular oxygen, creating an electrochemical gradient over the inner membrane that drives transmembrane transport and the ATP synthase. The cytochrome b-c1 complex catalyzes electron transfer from ubiquinol to cytochrome c, linking this redox reaction to translocation of protons across the mitochondrial inner membrane, with protons being carried across the membrane as hydrogens on the quinol. In the process called Q cycle, 2 protons are consumed from the matrix, 4 protons are released into the intermembrane space and 2 electrons are passed to cytochrome c. The chain is Cytochrome b-c1 complex subunit 6 from Solanum tuberosum (Potato).